The following is a 325-amino-acid chain: Golgi to ER traffic protein 4 homolog A (325 aa).

Disordered stretches follow at residues 1–22 (MAAAMAEQEGSKGSARNRGGVQ) and 306–325 (SGEDDDVEDGQEDSSPIELD). The segment covering 307–317 (GEDDDVEDGQE) has biased composition (acidic residues).

This sequence belongs to the GET4 family. In terms of assembly, component of the bag6/bat3 complex.

It is found in the cytoplasm. The protein resides in the cytosol. Its function is as follows. As part of a cytosolic protein quality control complex, the bag6/bat3 complex, maintains misfolded and hydrophobic patches-containing proteins in a soluble state and participates in their proper delivery to the endoplasmic reticulum or alternatively can promote their sorting to the proteasome where they undergo degradation. The bag6/bat3 complex is involved in the post-translational delivery of tail-anchored/type II transmembrane proteins to the endoplasmic reticulum membrane. Similarly, the bag6/bat3 complex also functions as a sorting platform for proteins of the secretory pathway that are mislocalized to the cytosol either delivering them to the proteasome for degradation or to the endoplasmic reticulum. The bag6/bat3 complex also plays a role in the endoplasmic reticulum-associated degradation (ERAD), a quality control mechanism that eliminates unwanted proteins of the endoplasmic reticulum through their retrotranslocation to the cytosol and their targeting to the proteasome. It maintains these retrotranslocated proteins in an unfolded yet soluble state condition in the cytosol to ensure their proper delivery to the proteasome. The sequence is that of Golgi to ER traffic protein 4 homolog A (get4-a) from Xenopus laevis (African clawed frog).